The sequence spans 360 residues: Chorismate synthase (360 aa).

NADP(+)-binding residues include Arg-48 and Arg-54. FMN is bound by residues 125 to 127 (RSS), 242 to 243 (NG), Gly-283, 298 to 302 (KPTSS), and Arg-324.

Belongs to the chorismate synthase family. In terms of assembly, homotetramer. It depends on FMNH2 as a cofactor.

It carries out the reaction 5-O-(1-carboxyvinyl)-3-phosphoshikimate = chorismate + phosphate. The protein operates within metabolic intermediate biosynthesis; chorismate biosynthesis; chorismate from D-erythrose 4-phosphate and phosphoenolpyruvate: step 7/7. In terms of biological role, catalyzes the anti-1,4-elimination of the C-3 phosphate and the C-6 proR hydrogen from 5-enolpyruvylshikimate-3-phosphate (EPSP) to yield chorismate, which is the branch point compound that serves as the starting substrate for the three terminal pathways of aromatic amino acid biosynthesis. This reaction introduces a second double bond into the aromatic ring system. This Gluconobacter oxydans (strain 621H) (Gluconobacter suboxydans) protein is Chorismate synthase.